The sequence spans 288 residues: Phosphatidylserine decarboxylase proenzyme (288 aa).

Residues Asp-89, His-146, and Ser-252 each act as charge relay system; for autoendoproteolytic cleavage activity in the active site. The active-site Schiff-base intermediate with substrate; via pyruvic acid; for decarboxylase activity is the Ser-252. Ser-252 is modified (pyruvic acid (Ser); by autocatalysis).

The protein belongs to the phosphatidylserine decarboxylase family. PSD-B subfamily. Prokaryotic type I sub-subfamily. In terms of assembly, heterodimer of a large membrane-associated beta subunit and a small pyruvoyl-containing alpha subunit. It depends on pyruvate as a cofactor. Is synthesized initially as an inactive proenzyme. Formation of the active enzyme involves a self-maturation process in which the active site pyruvoyl group is generated from an internal serine residue via an autocatalytic post-translational modification. Two non-identical subunits are generated from the proenzyme in this reaction, and the pyruvate is formed at the N-terminus of the alpha chain, which is derived from the carboxyl end of the proenzyme. The autoendoproteolytic cleavage occurs by a canonical serine protease mechanism, in which the side chain hydroxyl group of the serine supplies its oxygen atom to form the C-terminus of the beta chain, while the remainder of the serine residue undergoes an oxidative deamination to produce ammonia and the pyruvoyl prosthetic group on the alpha chain. During this reaction, the Ser that is part of the protease active site of the proenzyme becomes the pyruvoyl prosthetic group, which constitutes an essential element of the active site of the mature decarboxylase.

It is found in the cell membrane. The enzyme catalyses a 1,2-diacyl-sn-glycero-3-phospho-L-serine + H(+) = a 1,2-diacyl-sn-glycero-3-phosphoethanolamine + CO2. Its pathway is phospholipid metabolism; phosphatidylethanolamine biosynthesis; phosphatidylethanolamine from CDP-diacylglycerol: step 2/2. Catalyzes the formation of phosphatidylethanolamine (PtdEtn) from phosphatidylserine (PtdSer). The sequence is that of Phosphatidylserine decarboxylase proenzyme from Shewanella frigidimarina (strain NCIMB 400).